We begin with the raw amino-acid sequence, 361 residues long: (S)-coclaurine N-methyltransferase (361 aa).

The S-adenosyl-L-methionine site is built by Ser-101, Gly-139, Asn-163, Gln-167, Asp-189, Ile-190, and Val-205. The active site involves Cys-336.

This sequence belongs to the CFA/CMAS family. As to quaternary structure, homodimer. As to expression, highly expressed in rhizomes. Detected in roots, petioles, flower buds and leaves. Expressed between the developing stele and ground tissues near the root apical meristem, in the immature endodermis, the pericycle and the spokes of developing xylem in the apical region of the root and in the protoderm of leaf primordia in rhizomes.

The protein localises to the cytoplasm. It catalyses the reaction norreticuline + S-adenosyl-L-methionine = reticuline + S-adenosyl-L-homocysteine + H(+). The enzyme catalyses (S)-coclaurine + S-adenosyl-L-methionine = (S)-N-methylcoclaurine + S-adenosyl-L-homocysteine + H(+). It carries out the reaction heliamine + S-adenosyl-L-methionine = N-methylheliamine + S-adenosyl-L-homocysteine + H(+). It participates in alkaloid biosynthesis. Involved in the biosynthesis of protoberberine alkaloids. N-methyltransferase with a substrate preference for (R,S)-norreticuline but also active with dimethoxytetrahydroisoquinoline. The sequence is that of (S)-coclaurine N-methyltransferase from Thalictrum flavum subsp. glaucum (Yellow meadow rue).